Reading from the N-terminus, the 244-residue chain is Lytic polysaccharide monooxygenase-like protein ANIA_04702 (244 aa).

The N-terminal stretch at Met-1–Ala-23 is a signal peptide. His-24 serves as a coordination point for Cu(2+). His-24 carries the methylhistidine modification. Residues Asn-57, Asn-80, Asn-118, Asn-159, Asn-192, and Asn-198 are each glycosylated (N-linked (GlcNAc...) asparagine). 2 disulfide bridges follow: Cys-72–Cys-177 and Cys-142–Cys-196. The GPI-anchor amidated asparagine moiety is linked to residue Asn-215. Positions Ala-216–Ala-244 are cleaved as a propeptide — removed in mature form.

It belongs to the X325 family. The cofactor is Cu(2+). In terms of processing, the catalytically essential N-terminal histidine His-24 is post-translationally modified by methylation to prevent protonation of the histidine side chain, and protect the critical active site of the enzyme from oxidative damage.

The protein resides in the cell membrane. Functionally, lytic polysaccharide monooxygenase-like protein that has diverged to biological functions other than polysaccharide degradation since it does not perform oxidative cleavage of polysaccharides. Acts as a cell surface-bound protein that functions in the copper-accumulation pathway. May also act as the major cell wall sensor that regulates MAP kinase-dependent hyphal anastomosis, the fusion of hyphal cells. The chain is Lytic polysaccharide monooxygenase-like protein ANIA_04702 from Emericella nidulans (strain FGSC A4 / ATCC 38163 / CBS 112.46 / NRRL 194 / M139) (Aspergillus nidulans).